Reading from the N-terminus, the 371-residue chain is MGNYRIAVLPGDGIGKEVTSGAVEVLKAVGIRFGHEFTFEYGLIGGAAIDEAGTPLPEETLRLCRESDAVLLGAVGGPKWDDNPPHLRPEKGLLAIRKQLDLYANLRPVVCYDSLVSASPLKPDLVQGVDFVIVRELTGGIYFGQPSGRVVENGEEKAVDTLLYKKEEIERIVRMAFILARGRKKKVTSVDKANVLSSSRLWREVAEEVAKQFPDVTLEHMLVDNAAMQLIRAPKQFDVIVTENMFGDILSDEASMLSGSLGMLPSASLSASGPSLYEPVHGSAPDIAGMNKANPIAAILSAAMMLRLSFGLTAEAEAVEHAVRQALDQGLRTADLAPSGGRIVSTNEMVEEIKTAVLDYTAIAQIMTVYA.

77–90 is a binding site for NAD(+); the sequence is GPKWDDNPPHLRPE. Substrate is bound by residues Arg-97, Arg-107, Arg-135, and Asp-224. Residues Asp-224, Asp-248, and Asp-252 each contribute to the Mg(2+) site. NAD(+) is bound at residue 282 to 294; that stretch reads GSAPDIAGMNKAN.

Belongs to the isocitrate and isopropylmalate dehydrogenases family. LeuB type 1 subfamily. In terms of assembly, homodimer. Mg(2+) serves as cofactor. Requires Mn(2+) as cofactor.

It localises to the cytoplasm. The catalysed reaction is (2R,3S)-3-isopropylmalate + NAD(+) = 4-methyl-2-oxopentanoate + CO2 + NADH. It functions in the pathway amino-acid biosynthesis; L-leucine biosynthesis; L-leucine from 3-methyl-2-oxobutanoate: step 3/4. Its function is as follows. Catalyzes the oxidation of 3-carboxy-2-hydroxy-4-methylpentanoate (3-isopropylmalate) to 3-carboxy-4-methyl-2-oxopentanoate. The product decarboxylates to 4-methyl-2 oxopentanoate. The protein is 3-isopropylmalate dehydrogenase of Geobacillus kaustophilus (strain HTA426).